The following is a 429-amino-acid chain: GTPase Obg (429 aa).

The 158-residue stretch at 1 to 158 folds into the Obg domain; sequence MFVDQVKIYV…RNVQLELKVL (158 aa). The disordered stretch occupies residues 124–145; it reads RGNKRFATPANPAPELSENGEP. Residues 159 to 329 form the OBG-type G domain; that stretch reads ADVGLVGFPS…LLLAIADKLE (171 aa). Residues 165–172, 190–194, 212–215, 282–285, and 310–312 each bind GTP; these read GFPSVGKS, FTTIV, DLPG, NKMD, and SAV. Positions 172 and 192 each coordinate Mg(2+). The OCT domain maps to 351-429; sequence KYIAEEPDFE…LLDYEFEFMD (79 aa).

It belongs to the TRAFAC class OBG-HflX-like GTPase superfamily. OBG GTPase family. Monomer. Requires Mg(2+) as cofactor.

The protein localises to the cytoplasm. An essential GTPase which binds GTP, GDP and possibly (p)ppGpp with moderate affinity, with high nucleotide exchange rates and a fairly low GTP hydrolysis rate. Plays a role in control of the cell cycle, stress response, ribosome biogenesis and in those bacteria that undergo differentiation, in morphogenesis control. The sequence is that of GTPase Obg from Listeria welshimeri serovar 6b (strain ATCC 35897 / DSM 20650 / CCUG 15529 / CIP 8149 / NCTC 11857 / SLCC 5334 / V8).